A 154-amino-acid polypeptide reads, in one-letter code: Plastocyanin, chloroplastic (154 aa).

The transit peptide at M1–A57 directs the protein to the chloroplast. Residues Q58–N154 form the Plastocyanin-like domain. The Cu cation site is built by H94, C139, H142, and M147.

Belongs to the plastocyanin family. Cu(2+) is required as a cofactor.

It localises to the plastid. Its subcellular location is the chloroplast thylakoid membrane. Functionally, participates in electron transfer between P700 and the cytochrome b6-f complex in photosystem I. In Oryza sativa subsp. indica (Rice), this protein is Plastocyanin, chloroplastic (PETE).